The chain runs to 117 residues: UPF0344 protein GK0697 (117 aa).

The next 4 membrane-spanning stretches (helical) occupy residues 1 to 21, 39 to 59, 60 to 80, and 97 to 117; these read MTHA…LAVS, LFYI…ASIS, ALYW…EMVL, and VIAL…FDLF.

It belongs to the UPF0344 family.

The protein localises to the cell membrane. The chain is UPF0344 protein GK0697 from Geobacillus kaustophilus (strain HTA426).